Consider the following 528-residue polypeptide: GMP synthase [glutamine-hydrolyzing] (528 aa).

The region spanning threonine 13–threonine 203 is the Glutamine amidotransferase type-1 domain. The active-site Nucleophile is cysteine 90. Residues histidine 177 and glutamate 179 contribute to the active site. The 199-residue stretch at tryptophan 204–arginine 402 folds into the GMPS ATP-PPase domain. Serine 231–alanine 237 contacts ATP.

In terms of assembly, homodimer.

It catalyses the reaction XMP + L-glutamine + ATP + H2O = GMP + L-glutamate + AMP + diphosphate + 2 H(+). It functions in the pathway purine metabolism; GMP biosynthesis; GMP from XMP (L-Gln route): step 1/1. Its function is as follows. Catalyzes the synthesis of GMP from XMP. The polypeptide is GMP synthase [glutamine-hydrolyzing] (Thermobifida fusca (strain YX)).